A 231-amino-acid polypeptide reads, in one-letter code: Acyl-protein thioesterase 2 (231 aa).

C2 carries S-palmitoyl cysteine lipidation. At S82 the chain carries Phosphoserine. Residues S122, D176, and H210 each act as charge relay system in the active site.

Belongs to the AB hydrolase superfamily. AB hydrolase 2 family. In terms of tissue distribution, ubiquitous; detected at low levels.

It is found in the cytoplasm. The enzyme catalyses S-hexadecanoyl-L-cysteinyl-[protein] + H2O = L-cysteinyl-[protein] + hexadecanoate + H(+). It catalyses the reaction prostaglandin E2 1-glyceryl ester + H2O = prostaglandin E2 + glycerol + H(+). It carries out the reaction 1-hexadecanoyl-sn-glycero-3-phosphocholine + H2O = sn-glycerol 3-phosphocholine + hexadecanoate + H(+). The catalysed reaction is 1-octadecanoyl-sn-glycero-3-phosphocholine + H2O = octadecanoate + sn-glycerol 3-phosphocholine + H(+). The enzyme catalyses 1-hexadecanoyl-sn-glycero-3-phosphate + H2O = sn-glycerol 3-phosphate + hexadecanoate + H(+). It catalyses the reaction 1-hexadecanoyl-sn-glycero-3-phospho-L-serine + H2O = sn-glycero-3-phospho-L-serine + hexadecanoate + H(+). Functionally, acts as an acyl-protein thioesterase hydrolyzing fatty acids from S-acylated cysteine residues in proteins such as trimeric G alpha proteins, GSDMD, GAP43, ZDHHC6 or HRAS. Deacylates GAP43. Mediates depalmitoylation of ZDHHC6. Has lysophospholipase activity. Hydrolyzes prostaglandin glycerol esters (PG-Gs). Hydrolyzes PG-Gs in the following order prostaglandin D2-glycerol ester (PGD2-G) &gt; prostaglandin E2 glycerol ester (PGE2-G) &gt; prostaglandin F2-alpha-glycerol ester (PGF2-alpha-G). Hydrolyzes 1-arachidonoylglycerol but not 2-arachidonoylglycerol or arachidonoylethanolamide. This is Acyl-protein thioesterase 2 (Lypla2) from Mus musculus (Mouse).